A 239-amino-acid chain; its full sequence is Type II restriction enzyme Eco47II (239 aa).

It catalyses the reaction Endonucleolytic cleavage of DNA to give specific double-stranded fragments with terminal 5'-phosphates.. Functionally, a P subtype restriction enzyme that recognizes the double-stranded sequence 5'-GGNCC-3'; the cleavage site is unknown. The polypeptide is Type II restriction enzyme Eco47II (Escherichia coli).